A 210-amino-acid polypeptide reads, in one-letter code: Large ribosomal subunit protein uL4 (210 aa).

Over residues 44–54 (KRQGTASTLTR) the composition is skewed to polar residues. The disordered stretch occupies residues 44 to 94 (KRQGTASTLTRSEVRGGGRKPYKQKGTGRARQGSIRTPLRPGGGVIFGPKP). The span at 60–71 (GGRKPYKQKGTG) shows a compositional bias: basic residues.

The protein belongs to the universal ribosomal protein uL4 family. Part of the 50S ribosomal subunit.

Its function is as follows. One of the primary rRNA binding proteins, this protein initially binds near the 5'-end of the 23S rRNA. It is important during the early stages of 50S assembly. It makes multiple contacts with different domains of the 23S rRNA in the assembled 50S subunit and ribosome. In terms of biological role, forms part of the polypeptide exit tunnel. This chain is Large ribosomal subunit protein uL4, found in Prochlorococcus marinus subsp. pastoris (strain CCMP1986 / NIES-2087 / MED4).